We begin with the raw amino-acid sequence, 432 residues long: Putative D-alanyl-D-alanine carboxypeptidase (432 aa).

The helical; Signal-anchor transmembrane segment at 7–25 (ATVLLTFSLSAFAVEYPVL) threads the bilayer.

This sequence belongs to the peptidase S12 family. YfeW subfamily.

It is found in the cell inner membrane. The enzyme catalyses Preferential cleavage: (Ac)2-L-Lys-D-Ala-|-D-Ala. Also transpeptidation of peptidyl-alanyl moieties that are N-acyl substituents of D-alanine.. The protein is Putative D-alanyl-D-alanine carboxypeptidase of Salmonella choleraesuis (strain SC-B67).